We begin with the raw amino-acid sequence, 65 residues long: Protein translocase subunit SecE (65 aa).

At 1–27 (MEKLKEFLKGVRDELKRVVWPSRELVV) the chain is on the cytoplasmic side. A helical transmembrane segment spans residues 28-59 (KATISVIIFSLAIGVYLWILDLTFTKIISFIL). Topologically, residues 60–65 (SLRGSL) are periplasmic.

This sequence belongs to the SecE/SEC61-gamma family. As to quaternary structure, component of the Sec protein translocase complex. Heterotrimer consisting of SecY, SecE and SecG subunits. The heterotrimers can form oligomers, although 1 heterotrimer is thought to be able to translocate proteins. Interacts with SecDF, and other proteins may be involved. The channel interacts with SecA via subunit SecY.

The protein resides in the cell inner membrane. Essential subunit of the protein translocation channel SecYEG. Clamps together the 2 halves of SecY. May contact the channel plug during translocation. The chain is Protein translocase subunit SecE from Aquifex aeolicus (strain VF5).